A 213-amino-acid polypeptide reads, in one-letter code: MNYTKFDVKNWVRREHFEFYRHRLPCGFSLTSKIDITTLKKSLDDSAYKFYPVMIYLIAQAVNQFDELRMAIKDDELIVWDSVDPQFTVFHQETETFSALSCPYSSDIDQFMVNYLSVMERYKSDTKLFPQGVTPENHLNISALPWVNFDSFNLNVANFTDYFAPIITMAKYQQEGDRLLLPLSVQVHHAVCDGFHVARFINRLQELCNSKLK.

Residue histidine 189 is the Proton acceptor of the active site.

This sequence belongs to the chloramphenicol acetyltransferase family. As to quaternary structure, homotrimer.

The catalysed reaction is chloramphenicol + acetyl-CoA = chloramphenicol 3-acetate + CoA. Its function is as follows. This enzyme is an effector of chloramphenicol resistance in bacteria. This chain is Chloramphenicol acetyltransferase 3 (cat3), found in Escherichia coli.